We begin with the raw amino-acid sequence, 591 residues long: MADADKSEAAAGDDGSQQQPAEPRRDTHPGEPEKPPRSSANGVKMENDESVKEEKSDLKEKSTGNKKANRFHPYSKDKNSGTGEKKGPNRNRVFISNIPYDMKWQAIKDLMREKVGEVTYVELFKDAEGKSRGCGVVEFKDEEFVKKALETMNKYDLSGRPLNIKEDPDGENARRALQRTGTSFQGSHASDVGSGLVNLPPSILNNPNIPPEVISNLQAGRLGSTIFVANLDFKVGWKKLKEVFSIAGTVKRADIKEDKDGKSRGMGTVTFEQAIEAVQAISMFNGQFLFDRPMHVKMDDKSVPHEDYRSHDSKTSQLPRGLGGIGMGLGPGGQPISASQLNITGVMGNLGPSGMGMDGPGFGGVNRIGGGVGFGGLEAMNSMAGFGGVGRMGELYRGAMTSSMERDFGRGDIGLSRGFGDSFGRLGSAMIGGFAGRIGASNMGPVGTGISGSMSGMSTVTGGMGMGLDRMSSSFDRMGPGIGAILERSIDVDRGFLSGPMGSGMRDRLGSKGNQIFVRNLPFDLTWQKLKEKFSQCGHVMFAEIKMENGKSKGCGTVRFESAESAEKACRIMNGIKISGREIDVRLDRNA.

The interval 1–92 (MADADKSEAA…GEKKGPNRNR (92 aa)) is disordered. Residues 22–36 (EPRRDTHPGEPEKPP) are compositionally biased toward basic and acidic residues. Residue lysine 44 forms a Glycyl lysine isopeptide (Lys-Gly) (interchain with G-Cter in SUMO2) linkage. Basic and acidic residues-rich tracts occupy residues 45-63 (MEND…EKST) and 74-87 (YSKD…EKKG). 2 consecutive RRM domains span residues 91–169 (NRVF…EDPD) and 224–301 (STIF…MDDK). Arginine 397 and arginine 417 each carry omega-N-methylarginine. Serine 422 is subject to Phosphoserine. The RRM 3 domain maps to 514–590 (NQIFVRNLPF…REIDVRLDRN (77 aa)).

As to quaternary structure, monomer. Highly expressed in the brain.

It is found in the nucleus. Its function is as follows. Transcriptional repressor of the myelin basic protein gene (MBP). Binds to the proximal MB1 element 5'-TTGTCC-3' of the MBP promoter. Its binding to MB1 and function are inhibited by PURA. This Mus musculus (Mouse) protein is Myelin expression factor 2 (Myef2).